Here is a 359-residue protein sequence, read N- to C-terminus: 4-galactosyl-N-acetylglucosaminide 3-alpha-L-fucosyltransferase FUT6 (359 aa).

The Cytoplasmic segment spans residues 1–14 (MDPLGPAKPQWSWR). A helical; Signal-anchor for type II membrane protein transmembrane segment spans residues 15-34 (CCLTTLLFQLLMAVCFFSYL). The Lumenal segment spans residues 35 to 359 (RVSQDDPTVY…QTRGIAAWFT (325 aa)). 4 N-linked (GlcNAc...) asparagine glycosylation sites follow: N46, N91, N153, and N184. A determines site-specific fucosylation region spans residues 73 to 112 (KPIALPRCSEMVPGTADCNITADRKVYPQADAVIVHHREV).

It belongs to the glycosyltransferase 10 family. In terms of assembly, homodimer and monomer. Monomer (secreted form). Post-translationally, N-glycosylated. In terms of processing, proteolytic cleavage releases a secreted glycoform of 43 kDa. In terms of tissue distribution, kidney, liver, colon, small intestine, bladder, uterus and salivary gland.

It localises to the golgi apparatus. The protein localises to the golgi stack membrane. It is found in the secreted. It carries out the reaction a beta-D-galactosyl-(1-&gt;4)-N-acetyl-beta-D-glucosaminyl derivative + GDP-beta-L-fucose = a beta-D-galactosyl-(1-&gt;4)-[alpha-L-fucosyl-(1-&gt;3)]-N-acetyl-beta-D-glucosaminyl derivative + GDP + H(+). The enzyme catalyses an N-acetyl-alpha-neuraminyl-(2-&gt;3)-beta-D-galactosyl-(1-&gt;4)-N-acetyl-beta-D-glucosaminyl derivative + GDP-beta-L-fucose = an alpha-Neu5Ac-(2-&gt;3)-beta-D-Gal-(1-&gt;4)-[alpha-L-Fuc-(1-&gt;3)]-beta-D-GlcNAc derivative + GDP + H(+). It catalyses the reaction an alpha-Neu5Ac-(2-&gt;3)-beta-D-Gal-(1-&gt;4)-beta-D-GlcNAc-(1-&gt;3)-beta-D-Gal-(1-&gt;4)-[alpha-L-Fuc-(1-&gt;3)]-beta-D-GlcNAc derivative + GDP-beta-L-fucose = an alpha-Neu5Ac-(2-&gt;3)-beta-D-Gal-(1-&gt;4)-[alpha-L-Fuc-(1-&gt;3)]-beta-D-GlcNAc-(1-&gt;3)-beta-D-Gal-(1-&gt;4)-[alpha-L-Fuc-(1-&gt;3)]-beta-D-GlcNAc derivative + GDP + H(+). The catalysed reaction is a neolactoside nLc6Cer + GDP-beta-L-fucose = beta-D-Gal-(1-&gt;4)-[alpha-L-Fuc-(1-&gt;3)]-beta-D-GlcNAc-(1-&gt;3)-beta-D-Gal-(1-&gt;4)-beta-D-GlcNAc-(1-&gt;3)-beta-D-Gal-(1-&gt;4)-beta-D-Glc-(1&lt;-&gt;1')-Cer + GDP + H(+). It carries out the reaction a neolactoside nLc6Cer + GDP-beta-L-fucose = beta-D-galactosyl-(1-&gt;4)-N-acetyl-beta-D-glucosaminyl-(1-&gt;3)-beta-D-galactosyl-(1-&gt;4)-[alpha-L-fucosyl-(1-&gt;3)]-N-acetyl-beta-D-glucosaminyl-(1-&gt;3)-beta-D-galactosyl-(1-&gt;4)-beta-D-glucosyl-(1&lt;-&gt;1')-ceramide + GDP + H(+). The enzyme catalyses a neolactoside VI(3)-alpha-NeuNAc-nLc6Cer + GDP-beta-L-fucose = a neolactoside VI(3)-alpha-NeuAc,V(3)-alphaFuc-nLc6Cer + GDP + H(+). It catalyses the reaction beta-D-galactosyl-(1-&gt;4)-N-acetyl-D-glucosamine + GDP-beta-L-fucose = beta-D-galactosyl-(1-&gt;4)-[alpha-L-fucosyl-(1-&gt;3)]-N-acetyl-D-glucosamine + GDP + H(+). The catalysed reaction is N-acetyl-alpha-neuraminosyl-(2-&gt;3)-beta-D-galactosyl-(1-&gt;4)-N-acetyl-beta-D-glucosamine + GDP-beta-L-fucose = N-acetyl-alpha-neuraminosyl-(2-&gt;3)-beta-D-galactosyl-(1-&gt;4)-[alpha-L-fucosyl-(1-&gt;3)]-N-acetyl-beta-D-glucosamine + GDP + H(+). It carries out the reaction lactose + GDP-beta-L-fucose = beta-D-galactosyl-(1-&gt;4)-[alpha-L-fucosyl-(1-&gt;3)]-D-glucose + GDP + H(+). The enzyme catalyses alpha-L-Fuc-(1-&gt;2)-beta-D-Gal-(1-&gt;4)-D-Glc + GDP-beta-L-fucose = alpha-L-Fuc-(1-&gt;2)-beta-D-Gal-(1-&gt;4)-[alpha-L-Fuc-(1-&gt;3)]-D-Glc + GDP + H(+). It catalyses the reaction a beta-D-galactosyl-(1-&gt;4)-N-acetyl-beta-D-6-sulfooxy-glucosaminyl derivative + GDP-beta-L-fucose = a beta-D-galactosyl-(1-&gt;4)-[alpha-L-fucosyl-(1-&gt;3)]-N-acetyl-beta-D-6-sulfooxy-glucosaminyl derivative + GDP + H(+). Its pathway is protein modification; protein glycosylation. Functionally, catalyzes the transfer of L-fucose, from a guanosine diphosphate-beta-L-fucose, to the N-acetyl glucosamine (GlcNAc) of a distal alpha2,3 sialylated lactosamine unit of a glycoprotein- or a glycolipid-linked sialopolylactosamines chain or of a distal or internal lactosamine unit of a neutral glycoprotein- or a glycolipid-linked polylactosamines chain through an alpha-1,3 glycosidic linkage and participates in surface expression of the sialyl Lewis X (sLe(x)), Lewis X (Le(x)) and non sialylated VIM2 determinants. Moreover transfers fucose to H-type 2 (Fucalpha1-2Galbeta1-4GlcNAc) chain acceptor substrates and participates in difucosylated sialyl Lewis x determinants. Also fucosylates a polylactosamine substrate having a 6 sulfate modification at the GlcNAc moiety and gives rise to sialyl and non-sialyl 6-sulfo lewis X. Does not have activity towards type 1 ((Galbeta1-3GlcNAc)) and H-type 1 chain (Fucalpha1-2Galbeta1-3GlcNAc) acceptors substrates. In terms of biological role, does not have alpha(1,3)-fucosyltransferase activity. In Homo sapiens (Human), this protein is 4-galactosyl-N-acetylglucosaminide 3-alpha-L-fucosyltransferase FUT6.